The chain runs to 273 residues: Large ribosomal subunit protein uL2 (273 aa).

The interval 228–273 (VDHPHGGGEGKTSGGRHPVTPWGFPTKGKKTRKNKRTSKFIVKKRK) is disordered. Over residues 254-273 (KGKKTRKNKRTSKFIVKKRK) the composition is skewed to basic residues.

The protein belongs to the universal ribosomal protein uL2 family. In terms of assembly, part of the 50S ribosomal subunit. Forms a bridge to the 30S subunit in the 70S ribosome.

In terms of biological role, one of the primary rRNA binding proteins. Required for association of the 30S and 50S subunits to form the 70S ribosome, for tRNA binding and peptide bond formation. It has been suggested to have peptidyltransferase activity; this is somewhat controversial. Makes several contacts with the 16S rRNA in the 70S ribosome. This is Large ribosomal subunit protein uL2 from Rickettsia akari (strain Hartford).